The sequence spans 711 residues: Phosphate acetyltransferase (711 aa).

Residues 390 to 711 are phosphate acetyltransferase; the sequence is AFRFQLTELA…IALTAIQATQ (322 aa).

This sequence in the N-terminal section; belongs to the CobB/CobQ family. The protein in the C-terminal section; belongs to the phosphate acetyltransferase and butyryltransferase family. In terms of assembly, homohexamer.

The protein localises to the cytoplasm. The enzyme catalyses acetyl-CoA + phosphate = acetyl phosphate + CoA. Its pathway is metabolic intermediate biosynthesis; acetyl-CoA biosynthesis; acetyl-CoA from acetate: step 2/2. In terms of biological role, involved in acetate metabolism. This chain is Phosphate acetyltransferase (pta), found in Haemophilus influenzae (strain ATCC 51907 / DSM 11121 / KW20 / Rd).